A 455-amino-acid polypeptide reads, in one-letter code: Golgi pH regulator (455 aa).

A run of 5 helical transmembrane segments spans residues 5 to 25 (IDSS…WLFF), 46 to 66 (VTFA…LGVL), 79 to 99 (LCVI…YFIV), 114 to 134 (CLLW…FPIL), and 150 to 170 (VGVI…VNCP). Asn180 and Asn243 each carry an N-linked (GlcNAc...) asparagine glycan. Transmembrane regions (helical) follow at residues 290 to 310 (GYFF…NIVL), 343 to 363 (ISFI…LITL), 378 to 398 (VIVL…VLLI), and 425 to 445 (WFDV…YLAH).

It belongs to the Golgi pH regulator (TC 1.A.38) family. In terms of assembly, homotrimer. Interacts with RABL3; the interaction stabilizes GPR89B.

The protein resides in the golgi apparatus membrane. The catalysed reaction is iodide(out) = iodide(in). It carries out the reaction chloride(in) = chloride(out). The enzyme catalyses bromide(in) = bromide(out). It catalyses the reaction fluoride(in) = fluoride(out). Voltage-gated channel that enables the transfer of anions such as iodide, chloride, bromide and fluoride which may function in counter-ion conductance and participates in Golgi acidification. Plays a role in lymphocyte development, probably by acting as a RABL3 effector in hematopoietic cells. The sequence is that of Golgi pH regulator from Cricetulus griseus (Chinese hamster).